The chain runs to 785 residues: MERVLRVLEYEKMKKQLLEHVSSSLGRKKVEQLTPSTDFNKVKLWQAQTQEGANMLRLKGHVPLGGIFDIKPHLKRAKIGGLLHASELLEVASTIYGGRQLKKFIETMIEEEEADLPLLGEFARQIVPLTDLERAIKQCIDDNGHVLDSASPTLRTLRHQIRSFEANVRSKLEGITRSSNTAKMLSDAIVTIRNDRYVIPVKQEYRGAFGGIVHDQSASGATLFVEPQAVVEINNQLREAKAKEQREIERILSELSMQVSEHVDDLFVNVDVLAELDFIMARAHYGKAIRATQPILNNRGYLLIKQGRHPLIPDDEIVPIDIELGHSYSSLVITGPNTGGKTVTLKTIGLLTLMAQSGLHVPAEEESELAVFKHVFADIGDEQSIEQSLSTFSSHMTNIVDILGKVDHESLVLFDELGAGTDPTEGAALAIAILDDVYRRGARIVATTHYSELKGYAYNREGVMNASVEFDVETLSPTYRLLIGVPGRSNAFAISKRLGLEEKIIEQAKAHIDEDASQVESMIASLEQSQKSAESDWEEAEKALQEAEQLRLDLQKKLDDLEKEKERILAEAEQQAEQAVKDAKEEAEVIISELRDLQKQGVSVKEHQIIDAKKHLEEAAPKLTKQQKKVKRTAEKKREFKPGDEVKVLSFGQKGHIVEKVSEAEYQVQMGIMKMKVEASDLQLIDRPQPVETKPLATIRGSDHHVKPELDLRGERYEEAMLKVEKYLDDALLAGYASVSIIHGKGTGALRKGVKDLLKRHPHVKSARDGGANEGGLGNTVVELR.

Residue 335-342 participates in ATP binding; that stretch reads GPNTGGKT. Residues 710–785 form the Smr domain; the sequence is LDLRGERYEE…GLGNTVVELR (76 aa). The tract at residues 764–785 is disordered; it reads VKSARDGGANEGGLGNTVVELR.

It belongs to the DNA mismatch repair MutS family. MutS2 subfamily. As to quaternary structure, homodimer. Binds to stalled ribosomes, contacting rRNA.

Endonuclease that is involved in the suppression of homologous recombination and thus may have a key role in the control of bacterial genetic diversity. Its function is as follows. Acts as a ribosome collision sensor, splitting the ribosome into its 2 subunits. Detects stalled/collided 70S ribosomes which it binds and splits by an ATP-hydrolysis driven conformational change. Acts upstream of the ribosome quality control system (RQC), a ribosome-associated complex that mediates the extraction of incompletely synthesized nascent chains from stalled ribosomes and their subsequent degradation. Probably generates substrates for RQC. This Halalkalibacterium halodurans (strain ATCC BAA-125 / DSM 18197 / FERM 7344 / JCM 9153 / C-125) (Bacillus halodurans) protein is Endonuclease MutS2.